A 471-amino-acid chain; its full sequence is Putative multidrug resistance protein MdtD (471 aa).

Topologically, residues 1–11 (MTDLPDNTRWQ) are periplasmic. A helical transmembrane segment spans residues 12–32 (LWIVAFGFFMQSLDTTIVNTA). Topologically, residues 33–48 (LPSMAQSLGESPLHMH) are cytoplasmic. Residues 49-69 (MVIVSYVLTVAVMLPASGWLA) traverse the membrane as a helical segment. At 70-76 (DKVGVRN) the chain is on the periplasmic side. A helical membrane pass occupies residues 77-97 (IFFTAIVLFTLGSLFCALSGT). Residues 98–101 (LNEL) lie on the Cytoplasmic side of the membrane. A helical membrane pass occupies residues 102-124 (LLARALQGVGGAMMVPVGRLTVM). At 125 to 137 (KIVPREQYMAAMT) the chain is on the periplasmic side. Residues 138–158 (FVTLPGQVGPLLGPALGGLLV) form a helical membrane-spanning segment. The Cytoplasmic portion of the chain corresponds to 159 to 164 (EYASWH). Residues 165-185 (WIFLINIPVGIIGAIATLMLM) form a helical membrane-spanning segment. Residues 186-196 (PNYTMQTRRFD) are Periplasmic-facing. Residues 197-217 (LSGFLLLAIGMAVLTLALDGS) traverse the membrane as a helical segment. Residues 218 to 224 (KGTGLSP) lie on the Cytoplasmic side of the membrane. The helical transmembrane segment at 225 to 245 (LAITGLVAVGVVALVLYLLHA) threads the bilayer. Residues 246–262 (RNNNRALFSLKLFRTRT) lie on the Periplasmic side of the membrane. Residues 263–283 (FSLGLAGSFAGRIGSGMLPFM) traverse the membrane as a helical segment. Topologically, residues 284-285 (TP) are cytoplasmic. A helical transmembrane segment spans residues 286–306 (VFLQIGLGFSPFHAGLMMIPM). The Periplasmic portion of the chain corresponds to 307–341 (VLGSMGMKRIVVQVVNRFGYRRVLVATTLGLSLVT). A helical transmembrane segment spans residues 342–362 (LLFMTTALLGWYYVLPFVLFL). Residues 363–395 (QGMVNSTRFSSMNTLTLKDLPDNLASSGNSLLS) are Cytoplasmic-facing. Residues 396–416 (MIMQLSMSIGVTIAGLLLGLF) traverse the membrane as a helical segment. Residues 417-430 (GSQHVSVDSGTTQT) are Periplasmic-facing. Residues 431 to 451 (VFMYTWLSMAFIIALPAFIFA) traverse the membrane as a helical segment. The Cytoplasmic portion of the chain corresponds to 452–471 (RVPNDTHQNVAISRRKRSAQ).

It belongs to the major facilitator superfamily. TCR/Tet family.

The protein resides in the cell inner membrane. The chain is Putative multidrug resistance protein MdtD from Escherichia coli O17:K52:H18 (strain UMN026 / ExPEC).